The chain runs to 98 residues: Small ribosomal subunit protein bTHXm (98 aa).

A mitochondrion-targeting transit peptide spans 1 to 35 (MAAMQWCGAMTRRIMMTQRTSAALNCSARYSSLSP). The interval 52–71 (DKKTKKGKRFKGSYGNSRGK) is disordered. The segment covering 53-62 (KKTKKGKRFK) has biased composition (basic residues).

It belongs to the bacterial ribosomal protein bTHX family. In terms of assembly, component of the mitochondrial ribosome small subunit.

Its subcellular location is the mitochondrion. In Arabidopsis thaliana (Mouse-ear cress), this protein is Small ribosomal subunit protein bTHXm.